A 140-amino-acid chain; its full sequence is Large ribosomal subunit protein uL11 (140 aa).

Belongs to the universal ribosomal protein uL11 family. In terms of assembly, part of the ribosomal stalk of the 50S ribosomal subunit. Interacts with L10 and the large rRNA to form the base of the stalk. L10 forms an elongated spine to which L12 dimers bind in a sequential fashion forming a multimeric L10(L12)X complex. One or more lysine residues are methylated.

Its function is as follows. Forms part of the ribosomal stalk which helps the ribosome interact with GTP-bound translation factors. This Caldanaerobacter subterraneus subsp. tengcongensis (strain DSM 15242 / JCM 11007 / NBRC 100824 / MB4) (Thermoanaerobacter tengcongensis) protein is Large ribosomal subunit protein uL11.